A 183-amino-acid chain; its full sequence is Holliday junction branch migration complex subunit RuvA (183 aa).

The interval 1–64 (MVVGIEGIIT…EDSNKFYGFL (64 aa)) is domain I. The tract at residues 65–139 (DKDEQKMFEM…DTRTKLENVS (75 aa)) is domain II. Position 139 (serine 139) is a region of interest, flexible linker. Residues 139–183 (SDDKSEALAALLTLGFKQEKIISVLASAQATGTSELIKEALKKLR) form a domain III region.

It belongs to the RuvA family. As to quaternary structure, homotetramer. Forms an RuvA(8)-RuvB(12)-Holliday junction (HJ) complex. HJ DNA is sandwiched between 2 RuvA tetramers; dsDNA enters through RuvA and exits via RuvB. An RuvB hexamer assembles on each DNA strand where it exits the tetramer. Each RuvB hexamer is contacted by two RuvA subunits (via domain III) on 2 adjacent RuvB subunits; this complex drives branch migration. In the full resolvosome a probable DNA-RuvA(4)-RuvB(12)-RuvC(2) complex forms which resolves the HJ.

It is found in the cytoplasm. The RuvA-RuvB-RuvC complex processes Holliday junction (HJ) DNA during genetic recombination and DNA repair, while the RuvA-RuvB complex plays an important role in the rescue of blocked DNA replication forks via replication fork reversal (RFR). RuvA specifically binds to HJ cruciform DNA, conferring on it an open structure. The RuvB hexamer acts as an ATP-dependent pump, pulling dsDNA into and through the RuvAB complex. HJ branch migration allows RuvC to scan DNA until it finds its consensus sequence, where it cleaves and resolves the cruciform DNA. In Campylobacter jejuni subsp. doylei (strain ATCC BAA-1458 / RM4099 / 269.97), this protein is Holliday junction branch migration complex subunit RuvA.